Consider the following 510-residue polypeptide: Serine/threonine-protein kinase RIO3 (510 aa).

2 disordered regions span residues 100–126 (GSSSSVHFTPDRYHPKTMQETDSENED) and 143–191 (DEEN…DMVG). Composition is skewed to basic and acidic residues over residues 108–118 (TPDRYHPKTMQ) and 162–179 (TKHDTGVSGRRNADKTFN). The Protein kinase domain occupies 235 to 510 (LLLLKWINQG…RGISPAREYN (276 aa)). ATP-binding positions include 241–249 (INQGVFDSV) and Lys275. Asp388 functions as the Proton acceptor in the catalytic mechanism. Residues 474 to 499 (RSVDLRHDKSRPADMELKKYNEEKKA) are compositionally biased toward basic and acidic residues. The disordered stretch occupies residues 474 to 510 (RSVDLRHDKSRPADMELKKYNEEKKANRGISPAREYN).

It belongs to the protein kinase superfamily. RIO-type Ser/Thr kinase family. The cofactor is Mg(2+). As to expression, expressed in tail neurons (PVQ and PHAL/PQR).

It catalyses the reaction L-seryl-[protein] + ATP = O-phospho-L-seryl-[protein] + ADP + H(+). The enzyme catalyses L-threonyl-[protein] + ATP = O-phospho-L-threonyl-[protein] + ADP + H(+). This is Serine/threonine-protein kinase RIO3 (riok-3) from Caenorhabditis elegans.